We begin with the raw amino-acid sequence, 203 residues long: uncharacterized protein (203 aa).

A disordered region spans residues 1-23; the sequence is MGSSFVIDRSSSSPAPPRGPAPK.

This is an uncharacterized protein from Saccharomyces cerevisiae (strain ATCC 204508 / S288c) (Baker's yeast).